The following is a 157-amino-acid chain: Endoribonuclease YbeY (157 aa).

The Zn(2+) site is built by His-116, His-120, and His-126.

Belongs to the endoribonuclease YbeY family. Zn(2+) is required as a cofactor.

Its subcellular location is the cytoplasm. Single strand-specific metallo-endoribonuclease involved in late-stage 70S ribosome quality control and in maturation of the 3' terminus of the 16S rRNA. This chain is Endoribonuclease YbeY, found in Blochmanniella pennsylvanica (strain BPEN).